The sequence spans 259 residues: Ubiquinone/menaquinone biosynthesis C-methyltransferase UbiE (259 aa).

Residues T82, D103, 131 to 132 (NA), and S148 each bind S-adenosyl-L-methionine.

Belongs to the class I-like SAM-binding methyltransferase superfamily. MenG/UbiE family.

The enzyme catalyses a 2-demethylmenaquinol + S-adenosyl-L-methionine = a menaquinol + S-adenosyl-L-homocysteine + H(+). It carries out the reaction a 2-methoxy-6-(all-trans-polyprenyl)benzene-1,4-diol + S-adenosyl-L-methionine = a 5-methoxy-2-methyl-3-(all-trans-polyprenyl)benzene-1,4-diol + S-adenosyl-L-homocysteine + H(+). Its pathway is quinol/quinone metabolism; menaquinone biosynthesis; menaquinol from 1,4-dihydroxy-2-naphthoate: step 2/2. The protein operates within cofactor biosynthesis; ubiquinone biosynthesis. Methyltransferase required for the conversion of demethylmenaquinol (DMKH2) to menaquinol (MKH2) and the conversion of 2-polyprenyl-6-methoxy-1,4-benzoquinol (DDMQH2) to 2-polyprenyl-3-methyl-6-methoxy-1,4-benzoquinol (DMQH2). The chain is Ubiquinone/menaquinone biosynthesis C-methyltransferase UbiE from Vibrio parahaemolyticus serotype O3:K6 (strain RIMD 2210633).